A 72-amino-acid chain; its full sequence is Translation initiation factor IF-1 (72 aa).

Positions 1 to 72 (MAKEEAIEVE…TRGRITYREK (72 aa)) constitute an S1-like domain.

The protein belongs to the IF-1 family. Component of the 30S ribosomal translation pre-initiation complex which assembles on the 30S ribosome in the order IF-2 and IF-3, IF-1 and N-formylmethionyl-tRNA(fMet); mRNA recruitment can occur at any time during PIC assembly.

It is found in the cytoplasm. Functionally, one of the essential components for the initiation of protein synthesis. Stabilizes the binding of IF-2 and IF-3 on the 30S subunit to which N-formylmethionyl-tRNA(fMet) subsequently binds. Helps modulate mRNA selection, yielding the 30S pre-initiation complex (PIC). Upon addition of the 50S ribosomal subunit IF-1, IF-2 and IF-3 are released leaving the mature 70S translation initiation complex. This is Translation initiation factor IF-1 from Syntrophotalea carbinolica (strain DSM 2380 / NBRC 103641 / GraBd1) (Pelobacter carbinolicus).